The following is a 465-amino-acid chain: Botryococcus squalene synthase (465 aa).

NADP(+) contacts are provided by Arg48 and Arg73. 3 residues coordinate Mg(2+): Asp76, Glu79, and Asp80. The NADP(+) site is built by Arg215, Lys315, and Arg317. Helical transmembrane passes span 395 to 415 and 429 to 449; these read AIRL…FNLG and ILDL…LLVL.

This sequence belongs to the phytoene/squalene synthase family.

The protein localises to the membrane. The catalysed reaction is presqualene diphosphate + NADPH + H(+) = squalene + diphosphate + NADP(+). Produces squalene when coexpressed with SSL-1 and bisfarnesyl ether and a very small amount of squalene when incubated alone in the presence of NADPH. This Botryococcus braunii (Green alga) protein is Botryococcus squalene synthase (SSL-2).